Here is a 171-residue protein sequence, read N- to C-terminus: MAAAGSSSRFAVTCGLLSQYMRERQQPQPPVTVLEAVAEEEEEEDARTMQLFPPRAAAADGVATPSAGTAPLTIFYDGRMVVVDDVPVEKAAELMRLAGSACSPPQPAHAAALPEMPIARKASLQRFLQKRKHRITTTSEPYKKAAVASPAPEKSFAVAPVKDEPATWLGL.

The Tify domain maps to 65-100 (PSAGTAPLTIFYDGRMVVVDDVPVEKAAELMRLAGS). The short motif at 117–142 (PIARKASLQRFLQKRKHRITTTSEPY) is the Jas element. The Nuclear localization signal motif lies at 119 to 126 (ARKASLQR).

It belongs to the TIFY/JAZ family. Interacts with BHLH148 and COI1A. Interacts with COI1A, COI1B and COI2 in a coronatine-dependent manner. Coronatine is an analog of jasmonoyl isoleucine (JA-Ile). In terms of processing, ubiquitinated. Increase in jasmonoyl isoleucine (JA-Ile) levels mediates its degradation via COI1A-mediated proteasome pathway.

The protein resides in the nucleus. In terms of biological role, repressor of jasmonate (JA) responses. May act on an initial response of JA-regulated gene expression toward drought tolerance as part of a BHLH148-TIFY11D/JAZ12-COI1A complex. The protein is Protein TIFY 11d of Oryza sativa subsp. japonica (Rice).